Reading from the N-terminus, the 424-residue chain is Serine/threonine-protein kinase H1 (424 aa).

The N-myristoyl glycine moiety is linked to residue G2. C3 is lipidated: S-palmitoyl cysteine. The disordered stretch occupies residues 59 to 79 (APPCPGVPNTGHTAPPSEPPR). The region spanning 98–355 (YDIKALIGRG…ALQALRHPWV (258 aa)) is the Protein kinase domain. Residues 104–112 (IGRGSFSRV) and K127 each bind ATP. D218 serves as the catalytic Proton acceptor. The disordered stretch occupies residues 378 to 408 (RASSRCQSTKSSQSTRSSRSTRSNKSRRVRE). S380 and S381 each carry phosphoserine; by autocatalysis. Residues 381–398 (SRCQSTKSSQSTRSSRST) show a composition bias toward low complexity.

The protein belongs to the protein kinase superfamily. CAMK Ser/Thr protein kinase family. In terms of assembly, homodimer. In terms of processing, autophosphorylated on serine residues. Post-translationally, myristoylated. Required for membrane association. Prerequisite for palmitoylation to occur. Palmitoylated.

The protein localises to the golgi apparatus. It is found in the cytoplasm. It localises to the cytoskeleton. The protein resides in the microtubule organizing center. Its subcellular location is the centrosome. The protein localises to the nucleus speckle. It is found in the endoplasmic reticulum membrane. It localises to the cell membrane. It carries out the reaction L-seryl-[protein] + ATP = O-phospho-L-seryl-[protein] + ADP + H(+). The enzyme catalyses L-threonyl-[protein] + ATP = O-phospho-L-threonyl-[protein] + ADP + H(+). Activity depends on Ca(2+) concentration. In terms of biological role, serine/threonine protein kinase that may be involved in the regulation of pre-mRNA processing. It may phosphorylate components of nuclear splice factor compartments (SFC), such as non-snRNP splicing factors containing a serine/arginine-rich domain (SR proteins). Reversible phosphorylation of SR proteins may cause their release into the nucleoplasm and change their local concentration, thereby influencing alternative splicing. This chain is Serine/threonine-protein kinase H1 (Pskh1), found in Mus musculus (Mouse).